The following is a 350-amino-acid chain: Izumo sperm-egg fusion protein 1 (350 aa).

The signal sequence occupies residues 1 to 21; the sequence is MGPHFTLLCAALAGCLLPAEG. 5 cysteine pairs are disulfide-bonded: Cys-22/Cys-149, Cys-25/Cys-152, Cys-135/Cys-159, Cys-139/Cys-165, and Cys-182/Cys-233. Topologically, residues 22-292 are extracellular; that stretch reads CVICDPSVVL…LQPEKMLASR (271 aa). The important for interaction with IZUMO1R stretch occupies residues 148–160; it reads WCKNCKKEVHACR. Residues 167–251 form the Ig-like C2-type domain; that stretch reads ERNVEVPQME…PATIINFHVT (85 aa). An N-linked (GlcNAc...) asparagine glycan is attached at Asn-204. The helical transmembrane segment at 293-313 threads the bilayer; the sequence is LLGLLICGSLALITGLTFAIF. Topologically, residues 314–350 are cytoplasmic; the sequence is RRRKVIDFIKSSLFGLGSGAAEQTQVPKEKATDSRQQ. Residue Ser-325 is modified to Phosphoserine.

Belongs to the Izumo family. As to quaternary structure, monomer, homodimer; disulfide-linked and homooligomer; depending on the context. Interacts with IZUMO1R/JUNO. IZUMO1 and IZUMO1R/JUNO form a complex with 1:1 stoichiometry. In gamete recognition, IZUMO1R/JUNO first binds to monomeric IZUMO1. The weak, but specific interaction with IZUMO1R/JUNO induces IZUMO1 homodimerization. The process follows a tight binding phase where IZUMO1 bends the entire structure towards the sperm membrane side through a thiol-disulfide exchange reaction. The molecule no longer binds to IZUMO1R/JUNO and instead binds to a putative second oocyte receptor. Interacts with ACE3. Part of a oolemmal binding multimeric complex (IZUMO1 complex) composed at least of IZUMO1 and GLIPR1L1; the complex assemblage is influenced by the maturation status of the male germ cell. Interacts with GLIPR1L1. Interacts with FREY; the interaction retains IZUMO1 at the endoplasmic reticulum membrane and coordinates IZUMO1 complex assembly. Interacts with FCRL3/MAIA (via extracellular domain); the interaction replaces IZUMO1R/JUNO as IZUMO1 receptor after sperm-egg adhesion. Interacts with WDR54. Forms a complex with SPACA6 and TMEM81 on spermatocyte cell membrane. N-glycosylated. Glycosylation is not essential for fusion and for proper protein trafficking in sperm. Post-translationally, phosphorylated. The cytoplasmic C-terminus is phosphorylated and undergoes phosphorylation changes during epididymal transit. Sperm-specific (at protein level). Detectable on sperm surface only after the acrosome reaction.

It is found in the cell membrane. Its subcellular location is the cytoplasmic vesicle. The protein localises to the secretory vesicle. The protein resides in the acrosome membrane. In terms of biological role, essential sperm cell-surface protein required for fertilization by acting as a ligand for IZUMO1R/JUNO receptor on egg. The IZUMO1:IZUMO1R/JUNO interaction is a necessary adhesion event between sperm and egg that is required for fertilization but is not sufficient for cell fusion. The ligand-receptor interaction probably does not act as a membrane 'fusogen'. Acts a ligand for the human-specific oolemma epitope FCRL3/MAIA during fertilization. FCRL3/MAIA replaces IZUMO1R/JUNO as IZUMO1 receptor after sperm-egg adhesion, which permits species-specific gamete fusion. Plays a critical role in sperm-oolemma binding prior to plasma membrane fusion. Can mediate cell-cell fusion in cultured mammalian cells independently of its binding to IZUMO1R/JUNO. In Homo sapiens (Human), this protein is Izumo sperm-egg fusion protein 1.